Reading from the N-terminus, the 188-residue chain is Small ribosomal subunit protein uS12m (188 aa).

The transit peptide at 1 to 63 directs the protein to the mitochondrion; it reads MSGGRWISNL…AAFRLPQSSG (63 aa).

It belongs to the universal ribosomal protein uS12 family.

The protein localises to the mitochondrion. In terms of biological role, protein S12 is involved in the translation initiation step. This chain is Small ribosomal subunit protein uS12m (RPS12), found in Oenothera elata subsp. hookeri (Hooker's evening primrose).